The chain runs to 238 residues: tRNA (guanine-N(7)-)-methyltransferase (238 aa).

Glu-68, Glu-93, Asp-120, and Asp-143 together coordinate S-adenosyl-L-methionine. Asp-143 is a catalytic residue. Residues Lys-147, Asp-179, and 216–219 each bind substrate; that span reads TKFE.

This sequence belongs to the class I-like SAM-binding methyltransferase superfamily. TrmB family. As to quaternary structure, monomer.

The catalysed reaction is guanosine(46) in tRNA + S-adenosyl-L-methionine = N(7)-methylguanosine(46) in tRNA + S-adenosyl-L-homocysteine. It participates in tRNA modification; N(7)-methylguanine-tRNA biosynthesis. Catalyzes the formation of N(7)-methylguanine at position 46 (m7G46) in tRNA. The sequence is that of tRNA (guanine-N(7)-)-methyltransferase from Edwardsiella ictaluri (strain 93-146).